The sequence spans 73 residues: uncharacterized protein (73 aa).

This is an uncharacterized protein from Sinorhizobium fredii (strain NBRC 101917 / NGR234).